A 626-amino-acid chain; its full sequence is Mitogen-activated protein kinase kinase kinase 3 (626 aa).

The PB1 domain occupies 44–123 (DVRIKFEHNG…KSLRILLLSQ (80 aa)). Polar residues-rich tracts occupy residues 146–155 (QSAGDINTIY), 165–174 (LSVSSQNPGR), and 219–232 (SAENSLSGSCQSLD). 2 disordered regions span residues 146-184 (QSAGDINTIYQPPEPRSRHLSVSSQNPGRSSPPPGYVPE) and 218-262 (SSAE…SDRE). At S147 the chain carries Phosphoserine. Phosphoserine; by SGK1 is present on S166. S250 and S312 each carry phosphoserine. A Phosphoserine; by SGK1 modification is found at S337. S340 is subject to Phosphoserine. The Protein kinase domain maps to 362-622 (WRRGKLLGQG…AEELLTHHFA (261 aa)). Residues 368 to 376 (LGQGAFGRV) and K391 each bind ATP. D489 functions as the Proton acceptor in the catalytic mechanism.

This sequence belongs to the protein kinase superfamily. STE Ser/Thr protein kinase family. MAP kinase kinase kinase subfamily. Binds both upstream activators and downstream substrates in multimolecular complexes. Part of a complex with MAP2K3, RAC1 and CCM2. Interacts with MAP2K5 and SPAG9. The cofactor is Mg(2+). In terms of processing, phosphorylation at Ser-166 and Ser-337 by SGK1 inhibits its activity.

It carries out the reaction L-seryl-[protein] + ATP = O-phospho-L-seryl-[protein] + ADP + H(+). The catalysed reaction is L-threonyl-[protein] + ATP = O-phospho-L-threonyl-[protein] + ADP + H(+). Activated by phosphorylation on Thr-530. Component of a protein kinase signal transduction cascade. Mediates activation of the NF-kappa-B, AP1 and DDIT3 transcriptional regulators. This chain is Mitogen-activated protein kinase kinase kinase 3 (MAP3K3), found in Homo sapiens (Human).